Reading from the N-terminus, the 302-residue chain is Sulfate adenylyltransferase subunit 2 (302 aa).

Residues 280-302 are disordered; that stretch reads RQGRLIDSDQSASMEQKKRQGYF.

This sequence belongs to the PAPS reductase family. CysD subfamily. In terms of assembly, heterodimer composed of CysD, the smaller subunit, and CysN.

It catalyses the reaction sulfate + ATP + H(+) = adenosine 5'-phosphosulfate + diphosphate. It functions in the pathway sulfur metabolism; hydrogen sulfide biosynthesis; sulfite from sulfate: step 1/3. Functionally, with CysN forms the ATP sulfurylase (ATPS) that catalyzes the adenylation of sulfate producing adenosine 5'-phosphosulfate (APS) and diphosphate, the first enzymatic step in sulfur assimilation pathway. APS synthesis involves the formation of a high-energy phosphoric-sulfuric acid anhydride bond driven by GTP hydrolysis by CysN coupled to ATP hydrolysis by CysD. The polypeptide is Sulfate adenylyltransferase subunit 2 (Shewanella baltica (strain OS195)).